Consider the following 641-residue polypeptide: Single-strand DNA endonuclease 1 (641 aa).

The N-domain stretch occupies residues methionine 1–arginine 90. Residues glycine 2 to alanine 97 form an XPG-N domain region. 7 residues coordinate Mg(2+): aspartate 30, aspartate 76, glutamate 144, glutamate 146, aspartate 165, aspartate 167, and aspartate 217. Residues methionine 132 to aspartate 217 are XPG-I domain. I-domain stretches follow at residues methionine 132–asparagine 220 and methionine 132–glycine 221. The segment at aspartate 217–leucine 350 is 5'-3' exonuclease domain. Disordered regions lie at residues lysine 428–valine 448 and valine 572–histidine 615. Gly residues predominate over residues aspartate 580–alanine 590.

It belongs to the XPG/RAD2 endonuclease family. GEN subfamily. It depends on Mg(2+) as a cofactor. As to expression, highly expressed in shoot apical meristem (SAM) and young leaves. Expressed in roots, flag leaf and panicles.

The protein localises to the nucleus. Functionally, single-stranded DNA endonuclease activity in vitro. May not be active as double-stranded DNA endonuclease. Endonuclease which cleaves flap structures at the junction between single-stranded DNA and double-stranded DNA with a specific cleavage site in the 5' overhang strand exactly one nucleotide 3' of the branch point. Structure- and sequence-specific nuclease that resolves holliday junctions (HJs) by symmetrically oriented incisions in two opposing strands near the junction point, thus leading to ligatable products; HJs are physical links between homologous DNA molecules that arise as central intermediary structures during homologous recombination and repair in meiotic and somatic cells. Probably involved in the resolution of toxic replication structures to ensure genome stability, and to maintain telomere integrity and replication. This Oryza sativa subsp. japonica (Rice) protein is Single-strand DNA endonuclease 1.